We begin with the raw amino-acid sequence, 69 residues long: Small, acid-soluble spore protein C1 (69 aa).

The protein belongs to the alpha/beta-type SASP family.

In terms of biological role, SASP are bound to spore DNA. They are double-stranded DNA-binding proteins that cause DNA to change to an a-like conformation. They protect the DNA backbone from chemical and enzymatic cleavage and are thus involved in dormant spore's high resistance to UV light. In Priestia megaterium (Bacillus megaterium), this protein is Small, acid-soluble spore protein C1 (SASP-C1).